Reading from the N-terminus, the 133-residue chain is Small ribosomal subunit protein uS8 (133 aa).

The protein belongs to the universal ribosomal protein uS8 family. As to quaternary structure, part of the 30S ribosomal subunit.

Its function is as follows. One of the primary rRNA binding proteins, it binds directly to 16S rRNA central domain where it helps coordinate assembly of the platform of the 30S subunit. This is Small ribosomal subunit protein uS8 from Hyperthermus butylicus (strain DSM 5456 / JCM 9403 / PLM1-5).